The chain runs to 129 residues: Small ribosomal subunit protein uS11 (129 aa).

It belongs to the universal ribosomal protein uS11 family. In terms of assembly, part of the 30S ribosomal subunit. Interacts with proteins S7 and S18. Binds to IF-3.

In terms of biological role, located on the platform of the 30S subunit, it bridges several disparate RNA helices of the 16S rRNA. Forms part of the Shine-Dalgarno cleft in the 70S ribosome. The polypeptide is Small ribosomal subunit protein uS11 (Pseudomonas entomophila (strain L48)).